A 302-amino-acid chain; its full sequence is Glycine N-acyltransferase-like protein 1 (302 aa).

Belongs to the glycine N-acyltransferase family. Expressed in liver and kidney and, at lower levels, in pancreas, testis, ovary and stomach.

The enzyme catalyses an acyl-CoA + L-glutamine = an N(2)-acyl-L-glutamine + CoA + H(+). Functionally, acyltransferase which transfers an acyl group to the N-terminus of glutamine. Can use phenylacetyl-CoA as an acyl donor. In Homo sapiens (Human), this protein is Glycine N-acyltransferase-like protein 1.